The chain runs to 659 residues: Macrolide export ATP-binding/permease protein MacB (659 aa).

The ABC transporter domain maps to 10 to 249; the sequence is IELRGIRKRY…QPLLHHAGLS (240 aa). ATP is bound at residue 47–54; it reads GSSGSGKS. The next 4 helical transmembrane spans lie at 287-307, 538-558, 594-614, and 619-639; these read SLTLLGIVIGVASVIVMLAIG, LGLVAAVSLLVGGIGVMNVML, ITGGTVGVILGLTVGALLVFW, and VFSFGVMIGAFACAVITGLIF.

It belongs to the ABC transporter superfamily. Macrolide exporter (TC 3.A.1.122) family. As to quaternary structure, homodimer.

Its subcellular location is the cell inner membrane. Non-canonical ABC transporter that contains transmembrane domains (TMD), which form a pore in the inner membrane, and an ATP-binding domain (NBD), which is responsible for energy generation. Confers resistance against macrolides. The chain is Macrolide export ATP-binding/permease protein MacB from Nitrosomonas europaea (strain ATCC 19718 / CIP 103999 / KCTC 2705 / NBRC 14298).